The following is a 477-amino-acid chain: tRNA-2-methylthio-N(6)-dimethylallyladenosine synthase (477 aa).

Positions 3-120 (KKLHIKTWGC…LPTMIKQVQE (118 aa)) constitute an MTTase N-terminal domain. Positions 12, 49, 83, 157, 161, and 164 each coordinate [4Fe-4S] cluster. In terms of domain architecture, Radical SAM core spans 143–375 (RAEGATAFVS…QHVINNQSMQ (233 aa)). Residues 378 to 441 (RAMLGSTQRI…PNSLRGKFLR (64 aa)) form the TRAM domain.

This sequence belongs to the methylthiotransferase family. MiaB subfamily. As to quaternary structure, monomer. The cofactor is [4Fe-4S] cluster.

Its subcellular location is the cytoplasm. The enzyme catalyses N(6)-dimethylallyladenosine(37) in tRNA + (sulfur carrier)-SH + AH2 + 2 S-adenosyl-L-methionine = 2-methylsulfanyl-N(6)-dimethylallyladenosine(37) in tRNA + (sulfur carrier)-H + 5'-deoxyadenosine + L-methionine + A + S-adenosyl-L-homocysteine + 2 H(+). In terms of biological role, catalyzes the methylthiolation of N6-(dimethylallyl)adenosine (i(6)A), leading to the formation of 2-methylthio-N6-(dimethylallyl)adenosine (ms(2)i(6)A) at position 37 in tRNAs that read codons beginning with uridine. This Aeromonas hydrophila subsp. hydrophila (strain ATCC 7966 / DSM 30187 / BCRC 13018 / CCUG 14551 / JCM 1027 / KCTC 2358 / NCIMB 9240 / NCTC 8049) protein is tRNA-2-methylthio-N(6)-dimethylallyladenosine synthase.